A 399-amino-acid polypeptide reads, in one-letter code: Tyrosine--tRNA ligase 2 (399 aa).

Positions Pro41–His50 match the 'HIGH' region motif. The 'KMSKS' region motif lies at Lys225–Ser229. Lys228 is a binding site for ATP. The region spanning Ile336–Val398 is the S4 RNA-binding domain.

This sequence belongs to the class-I aminoacyl-tRNA synthetase family. TyrS type 2 subfamily. Homodimer.

Its subcellular location is the cytoplasm. It catalyses the reaction tRNA(Tyr) + L-tyrosine + ATP = L-tyrosyl-tRNA(Tyr) + AMP + diphosphate + H(+). Catalyzes the attachment of tyrosine to tRNA(Tyr) in a two-step reaction: tyrosine is first activated by ATP to form Tyr-AMP and then transferred to the acceptor end of tRNA(Tyr). This Pseudoalteromonas translucida (strain TAC 125) protein is Tyrosine--tRNA ligase 2.